The chain runs to 518 residues: Bifunctional purine biosynthesis protein PurH (518 aa).

One can recognise an MGS-like domain in the interval 1–144 (MSKRALISVS…KNHASVTVVC (144 aa)).

Belongs to the PurH family.

It catalyses the reaction (6R)-10-formyltetrahydrofolate + 5-amino-1-(5-phospho-beta-D-ribosyl)imidazole-4-carboxamide = 5-formamido-1-(5-phospho-D-ribosyl)imidazole-4-carboxamide + (6S)-5,6,7,8-tetrahydrofolate. The catalysed reaction is IMP + H2O = 5-formamido-1-(5-phospho-D-ribosyl)imidazole-4-carboxamide. It participates in purine metabolism; IMP biosynthesis via de novo pathway; 5-formamido-1-(5-phospho-D-ribosyl)imidazole-4-carboxamide from 5-amino-1-(5-phospho-D-ribosyl)imidazole-4-carboxamide (10-formyl THF route): step 1/1. The protein operates within purine metabolism; IMP biosynthesis via de novo pathway; IMP from 5-formamido-1-(5-phospho-D-ribosyl)imidazole-4-carboxamide: step 1/1. The chain is Bifunctional purine biosynthesis protein PurH from Lactococcus lactis subsp. lactis (strain IL1403) (Streptococcus lactis).